Here is a 415-residue protein sequence, read N- to C-terminus: MAALQPVRGTHDYLPDEARSHRHVEETARTVAERFGFGEIITPIFEFTDVFARTLGDTSDVVTKEMYTFTDRSGDSLTLRPENTAGVARAFISGGLAQNVPVKLFYRGPMFRHERPQKGRLRQFHQVGVELIGAENPLADVEVIALGSQLLGALGVGGRTILHLNSLGDPESREAYRAALVSYLSGHRDSLSRDSLERLERNPLRVLDSKDEGDRAVVAGAPRLIDHLNEASRAFFAGVTGGLEALGIPFEIDPLLVRGLDYYGHTAFEFVTTDLGAQGTVMAGGRYDGLIRQMGGSQTPGVGWAAGVERLSMLMAADRVGAPRPLAMIPAGPDDEVEALKLAHALRQGGLFVDFGYSGNLGKRMKRANRINARAAIILGGEERANGTVVVRDLDSGEQETIGLAVLEEFLARFL.

This sequence belongs to the class-II aminoacyl-tRNA synthetase family. In terms of assembly, homodimer.

The protein resides in the cytoplasm. It carries out the reaction tRNA(His) + L-histidine + ATP = L-histidyl-tRNA(His) + AMP + diphosphate + H(+). The polypeptide is Histidine--tRNA ligase (Rhodospirillum rubrum (strain ATCC 11170 / ATH 1.1.1 / DSM 467 / LMG 4362 / NCIMB 8255 / S1)).